A 110-amino-acid chain; its full sequence is UPF0122 protein BPUM_1495 (110 aa).

Belongs to the UPF0122 family.

In terms of biological role, might take part in the signal recognition particle (SRP) pathway. This is inferred from the conservation of its genetic proximity to ftsY/ffh. May be a regulatory protein. In Bacillus pumilus (strain SAFR-032), this protein is UPF0122 protein BPUM_1495.